Consider the following 108-residue polypeptide: Large ribosomal subunit protein bL21 (108 aa).

It belongs to the bacterial ribosomal protein bL21 family. As to quaternary structure, part of the 50S ribosomal subunit. Contacts protein L20.

This protein binds to 23S rRNA in the presence of protein L20. The chain is Large ribosomal subunit protein bL21 from Orientia tsutsugamushi (strain Ikeda) (Rickettsia tsutsugamushi).